A 315-amino-acid chain; its full sequence is Ribosomal RNA small subunit methyltransferase H (315 aa).

Residues 42–44 (GGH), D59, F96, D108, and Q115 each bind S-adenosyl-L-methionine.

It belongs to the methyltransferase superfamily. RsmH family.

It is found in the cytoplasm. The enzyme catalyses cytidine(1402) in 16S rRNA + S-adenosyl-L-methionine = N(4)-methylcytidine(1402) in 16S rRNA + S-adenosyl-L-homocysteine + H(+). In terms of biological role, specifically methylates the N4 position of cytidine in position 1402 (C1402) of 16S rRNA. The sequence is that of Ribosomal RNA small subunit methyltransferase H from Gemmatimonas aurantiaca (strain DSM 14586 / JCM 11422 / NBRC 100505 / T-27).